The following is a 464-amino-acid chain: Cysteine--tRNA ligase (464 aa).

C28 contacts Zn(2+). Positions 30-40 (PTVYDHSHIGH) match the 'HIGH' region motif. Positions 205, 230, and 234 each coordinate Zn(2+). A 'KMSKS' region motif is present at residues 263–267 (KMSKS). K266 is a binding site for ATP.

This sequence belongs to the class-I aminoacyl-tRNA synthetase family. It depends on Zn(2+) as a cofactor.

The protein localises to the cytoplasm. It catalyses the reaction tRNA(Cys) + L-cysteine + ATP = L-cysteinyl-tRNA(Cys) + AMP + diphosphate. The chain is Cysteine--tRNA ligase from Ignicoccus hospitalis (strain KIN4/I / DSM 18386 / JCM 14125).